Reading from the N-terminus, the 188-residue chain is MAAAPGARLLRAACASVPFRGLDRCRLLVCGTGAGTAISPWTPSPRLHAEAGPGRPLSVSARARSSSEDKITVHFKNRDGETLTTKGKIGDSLLDVVIENNLDIDGFGACEGTLACSTCHLIFEDHIYEKLDAITDEENDMLDLAFGLTDRSRLGCQVCLTKAMDNMTVRVPEAVADVRQSVDMSKNS.

A mitochondrion-targeting transit peptide spans 1-64 (MAAAPGARLL…RPLSVSARAR (64 aa)). Phosphoserine is present on Ser67. Residues 69–175 (DKITVHFKNR…NMTVRVPEAV (107 aa)) form the 2Fe-2S ferredoxin-type domain. Lys70 carries the post-translational modification N6-acetyllysine; alternate. N6-succinyllysine; alternate is present on Lys70. Residues Cys110, Cys116, Cys119, and Cys156 each coordinate [2Fe-2S] cluster. The residue at position 162 (Lys162) is an N6-succinyllysine. Ser181 bears the Phosphoserine mark.

The protein belongs to the adrenodoxin/putidaredoxin family. Interacts with CYP11A1. [2Fe-2S] cluster is required as a cofactor.

Its subcellular location is the mitochondrion matrix. Essential for the synthesis of various steroid hormones, participates in the reduction of mitochondrial cytochrome P450 for steroidogenesis. Transfers electrons from adrenodoxin reductase to CYP11A1, a cytochrome P450 that catalyzes cholesterol side-chain cleavage. Does not form a ternary complex with adrenodoxin reductase and CYP11A1 but shuttles between the two enzymes to transfer electrons. This Mus musculus (Mouse) protein is Adrenodoxin, mitochondrial (Fdx1).